Consider the following 76-residue polypeptide: MKADIHPQYHLVKVVMTDGTEFLTRSTYGSEGATLNLDIDPKTHPAWTGGSAQLLDRGGRLSRFNSRFSGLSFGKK.

It belongs to the bacterial ribosomal protein bL31 family. Type A subfamily. In terms of assembly, part of the 50S ribosomal subunit.

Binds the 23S rRNA. The sequence is that of Large ribosomal subunit protein bL31 from Methylocella silvestris (strain DSM 15510 / CIP 108128 / LMG 27833 / NCIMB 13906 / BL2).